The primary structure comprises 326 residues: ATPase GET3 (326 aa).

32–39 (KGGVGKTT) contributes to the ATP binding site. Residue Asp61 is part of the active site. The ATP site is built by Glu244 and Asn271. Zn(2+) contacts are provided by Cys282 and Cys285.

This sequence belongs to the arsA ATPase family. As to quaternary structure, homodimer.

Its subcellular location is the cytoplasm. The protein resides in the endoplasmic reticulum. In terms of biological role, ATPase required for the post-translational delivery of tail-anchored (TA) proteins to the endoplasmic reticulum. Recognizes and selectively binds the transmembrane domain of TA proteins in the cytosol. This complex then targets to the endoplasmic reticulum by membrane-bound receptors, where the tail-anchored protein is released for insertion. This process is regulated by ATP binding and hydrolysis. ATP binding drives the homodimer towards the closed dimer state, facilitating recognition of newly synthesized TA membrane proteins. ATP hydrolysis is required for insertion. Subsequently, the homodimer reverts towards the open dimer state, lowering its affinity for the membrane-bound receptor, and returning it to the cytosol to initiate a new round of targeting. This is ATPase GET3 from Phaeosphaeria nodorum (strain SN15 / ATCC MYA-4574 / FGSC 10173) (Glume blotch fungus).